The sequence spans 98 residues: NADH-ubiquinone oxidoreductase chain 4L (98 aa).

The next 3 helical transmembrane spans lie at 2–22, 30–50, and 61–81; these read PFIYINILLALTTALLGLLLF, LLCLEGLMLSLFIMSALTTLG, and IILMVFAACETALGLALLVTI.

It belongs to the complex I subunit 4L family. As to quaternary structure, core subunit of respiratory chain NADH dehydrogenase (Complex I) which is composed of 45 different subunits.

Its subcellular location is the mitochondrion inner membrane. The enzyme catalyses a ubiquinone + NADH + 5 H(+)(in) = a ubiquinol + NAD(+) + 4 H(+)(out). In terms of biological role, core subunit of the mitochondrial membrane respiratory chain NADH dehydrogenase (Complex I) which catalyzes electron transfer from NADH through the respiratory chain, using ubiquinone as an electron acceptor. Part of the enzyme membrane arm which is embedded in the lipid bilayer and involved in proton translocation. This chain is NADH-ubiquinone oxidoreductase chain 4L (MT-ND4L), found in Bradypus tridactylus (Pale-throated three-toed sloth).